The following is a 350-amino-acid chain: Chorismate synthase (350 aa).

Arg48 provides a ligand contact to NADP(+). Residues 125–127, Gly277, 292–296, and Arg318 each bind FMN; these read RSS and KPIPS.

The protein belongs to the chorismate synthase family. As to quaternary structure, homotetramer. Requires FMNH2 as cofactor.

The enzyme catalyses 5-O-(1-carboxyvinyl)-3-phosphoshikimate = chorismate + phosphate. It participates in metabolic intermediate biosynthesis; chorismate biosynthesis; chorismate from D-erythrose 4-phosphate and phosphoenolpyruvate: step 7/7. In terms of biological role, catalyzes the anti-1,4-elimination of the C-3 phosphate and the C-6 proR hydrogen from 5-enolpyruvylshikimate-3-phosphate (EPSP) to yield chorismate, which is the branch point compound that serves as the starting substrate for the three terminal pathways of aromatic amino acid biosynthesis. This reaction introduces a second double bond into the aromatic ring system. The polypeptide is Chorismate synthase (Maridesulfovibrio salexigens (strain ATCC 14822 / DSM 2638 / NCIMB 8403 / VKM B-1763) (Desulfovibrio salexigens)).